A 57-amino-acid polypeptide reads, in one-letter code: MSTKDFNLDLVSVSKKDSGASPRITSISLCTPGCKTGALMGCNMKTATCNCSIHVSK.

The propeptide occupies 1–23; that stretch reads MSTKDFNLDLVSVSKKDSGASPR. At Thr-25 the chain carries 2,3-didehydrobutyrine. The lanthionine (Ser-Cys) cross-link spans 26–30; the sequence is SISLC. Ser-28 bears the 2,3-didehydroalanine (Ser) mark. Cross-links (beta-methyllanthionine (Thr-Cys)) lie at residues 31-34, 36-42, 46-49, and 48-51; these read TPGC, TGALMGC, TATC, and TCNC. Ser-56 carries the post-translational modification 2,3-didehydroalanine (Ser).

It belongs to the type A lantibiotic family. Post-translationally, maturation of lantibiotics involves the enzymatic conversion of Thr, and Ser into dehydrated AA and the formation of thioether bonds with cysteine. This is followed by membrane translocation and cleavage of the modified precursor. In terms of processing, the structure of the 2,3-didehydrobutyrine is not discussed in PubMed:15361862. It is probably the Z-isomer by similarity.

In terms of biological role, lanthionine-containing peptide antibiotic (lantibiotic) active on Gram-positive bacteria. The bactericidal activity of lantibiotics is based on depolarization of energized bacterial cytoplasmic membranes, initiated by the formation of aqueous transmembrane pores. This chain is Lantibiotic nisin-Z (nisZ), found in Lactococcus lactis subsp. lactis (Streptococcus lactis).